A 63-amino-acid chain; its full sequence is Beta-defensin 3 (63 aa).

Residues 1–20 form the signal peptide; that stretch reads MRIHYLLFAFLLVLLSPPAA. A propeptide spanning residues 21-22 is cleaved from the precursor; the sequence is FS. 3 disulfides stabilise this stretch: Cys-31-Cys-59, Cys-38-Cys-52, and Cys-42-Cys-60.

This sequence belongs to the beta-defensin family. LAP/TAP subfamily. Highest expression in salivary glands, epididymis, ovary and pancreas and to a lesser extent in lung, liver and brain. Low or no expression in skeletal muscle and tongue.

The protein resides in the secreted. In terms of biological role, antimicrobial activity against Gram-negative bacteria E.coli and P.aeruginosa. The sequence is that of Beta-defensin 3 (Defb3) from Mus musculus (Mouse).